A 259-amino-acid chain; its full sequence is Proteasome assembly chaperone 2 (259 aa).

It belongs to the PSMG2 family. As to quaternary structure, forms a heterodimer with psmg1. In terms of processing, degraded by the proteasome upon completion of 20S proteasome maturation.

It localises to the nucleus. Its function is as follows. Chaperone protein which promotes assembly of the 20S proteasome as part of a heterodimer with psmg1. This chain is Proteasome assembly chaperone 2, found in Xenopus laevis (African clawed frog).